A 239-amino-acid chain; its full sequence is Orotidine 5'-phosphate decarboxylase (239 aa).

Residues D15, K37, 64–73, T126, R187, Q196, G216, and R217 contribute to the substrate site; that span reads DLKFHDIPNT. Residue K66 is the Proton donor of the active site.

It belongs to the OMP decarboxylase family. Type 1 subfamily. In terms of assembly, homodimer.

It carries out the reaction orotidine 5'-phosphate + H(+) = UMP + CO2. Its pathway is pyrimidine metabolism; UMP biosynthesis via de novo pathway; UMP from orotate: step 2/2. Its function is as follows. Catalyzes the decarboxylation of orotidine 5'-monophosphate (OMP) to uridine 5'-monophosphate (UMP). This is Orotidine 5'-phosphate decarboxylase from Geobacter metallireducens (strain ATCC 53774 / DSM 7210 / GS-15).